Here is a 307-residue protein sequence, read N- to C-terminus: tRNA pseudouridine synthase B (307 aa).

The Nucleophile role is filled by Asp39.

This sequence belongs to the pseudouridine synthase TruB family. Type 1 subfamily.

The catalysed reaction is uridine(55) in tRNA = pseudouridine(55) in tRNA. Responsible for synthesis of pseudouridine from uracil-55 in the psi GC loop of transfer RNAs. The chain is tRNA pseudouridine synthase B from Lactiplantibacillus plantarum (strain ATCC BAA-793 / NCIMB 8826 / WCFS1) (Lactobacillus plantarum).